The primary structure comprises 201 residues: MQTSPLLESLMEALRCLPGVGPKSAQRMAFQLLQRDRSGGMRLAQALTRAMSEIGHCADCRTFTEQEHCTICLNPRRQQNGQICVVESPADIHAIEQTGQFGGRYFVLMGHLSPMDGIGPGDIGLDLLEKRLSTEAISEVILATNPTVEGDATANYIGQMCGQYGILASRIAHGVPVGGELEMVDGTTLSHSLAGRNPIKY.

The segment at 57 to 72 adopts a C4-type zinc-finger fold; it reads CADCRTFTEQEHCTIC. Residues 81–176 enclose the Toprim domain; that stretch reads GQICVVESPA…LASRIAHGVP (96 aa).

The protein belongs to the RecR family.

Its function is as follows. May play a role in DNA repair. It seems to be involved in an RecBC-independent recombinational process of DNA repair. It may act with RecF and RecO. The sequence is that of Recombination protein RecR from Yersinia pestis bv. Antiqua (strain Antiqua).